The following is an 851-amino-acid chain: DNA mismatch repair protein MutS (851 aa).

Position 602–609 (602–609) interacts with ATP; the sequence is GPNMSGKS.

The protein belongs to the DNA mismatch repair MutS family.

This protein is involved in the repair of mismatches in DNA. It is possible that it carries out the mismatch recognition step. This protein has a weak ATPase activity. The protein is DNA mismatch repair protein MutS of Streptococcus pyogenes serotype M49 (strain NZ131).